A 393-amino-acid polypeptide reads, in one-letter code: Geranylgeranyl pyrophosphate synthase 2 (393 aa).

Residues K109, R112, and H141 each contribute to the isopentenyl diphosphate site. D148 and D152 together coordinate Mg(2+). Dimethylallyl diphosphate is bound at residue R157. Position 158 (R158) interacts with isopentenyl diphosphate. Dimethylallyl diphosphate-binding residues include K235, T236, and Q275. D278 is a binding site for Mg(2+). Positions 282, 292, and 302 each coordinate dimethylallyl diphosphate.

Belongs to the FPP/GGPP synthase family. Mg(2+) serves as cofactor.

It catalyses the reaction isopentenyl diphosphate + dimethylallyl diphosphate = (2E)-geranyl diphosphate + diphosphate. It carries out the reaction isopentenyl diphosphate + (2E)-geranyl diphosphate = (2E,6E)-farnesyl diphosphate + diphosphate. The enzyme catalyses isopentenyl diphosphate + (2E,6E)-farnesyl diphosphate = (2E,6E,10E)-geranylgeranyl diphosphate + diphosphate. It functions in the pathway plant hormone biosynthesis; gibberellin biosynthesis. Functionally, geranylgeranyl pyrophosphate synthase; part of the gene cluster that mediates the biosynthesis of gibberellins (GAs), diterpenoids that may provide a selective advantage during infection of the preferred host plant, rice. Gibberellins (GAs) are diterpenoids and are synthesized via the mevalonate pathway. Biosynthesis of the major metabolite GA3 (gibberellic acid) from geranylgeranyl diphosphate (GGPP) requires 13 steps. The GGPP produced by the geranylgeranyl diphosphate synthase GGS2 is converted to ent-kaurene via ent-copalyldiphosphate in a two-step cyclization reaction performed by the bifunctional ent-copalyl diphosphate synthase/ent-kaurene synthase enzyme (CPS/KS). Ent-Kaurene is metabolized to GAs by a series of oxidation reactions catalyzed by cytochrome P450 monooxygenases. Cytochrome P450 monooxygenase P450-4 is an ent-kaurene oxidase that catalyzes the three oxidation steps between ent-kaurene and ent-kaurenoic acid. The highly multifunctional cytochrome P450 monooxygenase P450-1 then catalyzes four steps involving oxidation at two carbon atoms, in the main pathway from ent-kaurenoic acid to GA14 via GA12-aldehyde as well as producing kaurenolides and fujenoic acids as by-products. The cytochrome P450 monooxygenase P450-2 then converts GA14 to GA4 by removal of C-20. GA4 is further converted to GA7 by the GA4 desaturase DES via 1,2-desaturation before cytochrome P450 monooxygenase P450-3, a 13-hydroxylase, hydroxylates GA7 to GA3, the final product of the GA-biosynthetic pathway. The protein is Geranylgeranyl pyrophosphate synthase 2 of Gibberella fujikuroi (strain CBS 195.34 / IMI 58289 / NRRL A-6831) (Bakanae and foot rot disease fungus).